Here is a 177-residue protein sequence, read N- to C-terminus: MSRVAKAPVSIPAGVEVKLDGQLLTVKGKNGELSHTIHNSVEVKQDNNQLTFSPRVGIANADAQSGTARALVNAMVIGVNEGFTKKLQLVGVGYRAQMKGNVLVLSLGFSHPIDHVLPAGVTAECPSQTEIVLKSADKQLIGQVAADIRAYRRPEPYKGKGVRYADEVVRMKEAKKK.

It belongs to the universal ribosomal protein uL6 family. Part of the 50S ribosomal subunit.

This protein binds to the 23S rRNA, and is important in its secondary structure. It is located near the subunit interface in the base of the L7/L12 stalk, and near the tRNA binding site of the peptidyltransferase center. This Histophilus somni (strain 2336) (Haemophilus somnus) protein is Large ribosomal subunit protein uL6.